The following is a 347-amino-acid chain: NADH-ubiquinone oxidoreductase chain 2 (347 aa).

A run of 10 helical transmembrane segments spans residues 13–33, 59–79, 96–116, 122–142, 144–164, 178–200, 210–232, 246–266, 276–296, and 326–346; these read IVLG…WMGF, YFLT…INLV, IIMT…FWVP, ISLL…LSVL, VISP…SILI, ILAY…NPMM, LMTA…ALSH, IIML…KWMI, IILA…YMRL, and LPML…MILL.

It belongs to the complex I subunit 2 family. Core subunit of respiratory chain NADH dehydrogenase (Complex I) which is composed of 45 different subunits. Interacts with TMEM242.

It is found in the mitochondrion inner membrane. It catalyses the reaction a ubiquinone + NADH + 5 H(+)(in) = a ubiquinol + NAD(+) + 4 H(+)(out). Functionally, core subunit of the mitochondrial membrane respiratory chain NADH dehydrogenase (Complex I) which catalyzes electron transfer from NADH through the respiratory chain, using ubiquinone as an electron acceptor. Essential for the catalytic activity and assembly of complex I. The protein is NADH-ubiquinone oxidoreductase chain 2 of Rhynchonycteris naso (Brazilian long-nosed bat).